The primary structure comprises 274 residues: Formamidopyrimidine-DNA glycosylase (274 aa).

Proline 2 functions as the Schiff-base intermediate with DNA in the catalytic mechanism. Glutamate 3 acts as the Proton donor in catalysis. Lysine 58 acts as the Proton donor; for beta-elimination activity in catalysis. DNA contacts are provided by histidine 92 and arginine 111. The segment at 239-273 (HVYGREGEPCERCGTIIEKIKVAQRGTHFCPLEQR) adopts an FPG-type; degenerate zinc-finger fold. Catalysis depends on arginine 263, which acts as the Proton donor; for delta-elimination activity.

It belongs to the FPG family. In terms of assembly, monomer. Zn(2+) serves as cofactor.

It catalyses the reaction Hydrolysis of DNA containing ring-opened 7-methylguanine residues, releasing 2,6-diamino-4-hydroxy-5-(N-methyl)formamidopyrimidine.. The enzyme catalyses 2'-deoxyribonucleotide-(2'-deoxyribose 5'-phosphate)-2'-deoxyribonucleotide-DNA = a 3'-end 2'-deoxyribonucleotide-(2,3-dehydro-2,3-deoxyribose 5'-phosphate)-DNA + a 5'-end 5'-phospho-2'-deoxyribonucleoside-DNA + H(+). Involved in base excision repair of DNA damaged by oxidation or by mutagenic agents. Acts as a DNA glycosylase that recognizes and removes damaged bases. Has a preference for oxidized purines, such as 7,8-dihydro-8-oxoguanine (8-oxoG). Has AP (apurinic/apyrimidinic) lyase activity and introduces nicks in the DNA strand. Cleaves the DNA backbone by beta-delta elimination to generate a single-strand break at the site of the removed base with both 3'- and 5'-phosphates. This chain is Formamidopyrimidine-DNA glycosylase, found in Lactiplantibacillus plantarum (strain ATCC BAA-793 / NCIMB 8826 / WCFS1) (Lactobacillus plantarum).